Consider the following 580-residue polypeptide: Mitogen-activated protein kinase 12 (580 aa).

The segment at 18–38 (RTASGSNQSSNAGEEAASSDL) is disordered. Polar residues predominate over residues 20–29 (ASGSNQSSNA). In terms of domain architecture, Protein kinase spans 87 to 378 (YQIQEVIGKG…AEEALADPYF (292 aa)). Residues 93 to 101 (IGKGSYGVV) and Lys-116 contribute to the ATP site. Asp-213 (proton acceptor) is an active-site residue. Thr-249 is modified (phosphothreonine). Residues 249-251 (TDY) carry the TXY motif. At Tyr-251 the chain carries Phosphotyrosine. The interval 325-506 (ARRYLSTMRK…SADSVARTTV (182 aa)) is required for kinase activity and nuclear localization. Positions 458 to 580 (YSKGERGSPL…LSEQVSRMHS (123 aa)) are disordered. Residues 502–543 (ARTTVSPPMSQDAQQHGSAGQNGVTSTDLSSRSYLKSASISA) show a composition bias toward polar residues. A compositionally biased stretch (acidic residues) spans 554 to 566 (EPEDDYISEEMEG).

The protein belongs to the protein kinase superfamily. CMGC Ser/Thr protein kinase family. MAP kinase subfamily. In terms of assembly, interacts with EREBP1. Dually phosphorylated on Thr-249 and Tyr-251, which activates the enzyme. Phosphorylated on tyrosine residue.

It localises to the cytoplasm. The protein localises to the nucleus. The catalysed reaction is L-seryl-[protein] + ATP = O-phospho-L-seryl-[protein] + ADP + H(+). It carries out the reaction L-threonyl-[protein] + ATP = O-phospho-L-threonyl-[protein] + ADP + H(+). Its activity is regulated as follows. Activated by threonine and tyrosine phosphorylation. Activated in response to hydrogen peroxide, salicylic acid, jasmonic acid, ethylene, fungal elicitor and infection with rice blast fungus (M.grisea). Functionally, may be involved in defense signaling pathway. Phosphorylates EREBP1 transcriptional activator in vitro. Enhances DNA-binding activity of EREBP1 to the GCC box element of pathogenesis-related (PR) gene promoters. The chain is Mitogen-activated protein kinase 12 (MPK12) from Oryza sativa subsp. japonica (Rice).